Consider the following 192-residue polypeptide: UPF0301 protein Bcep1808_0798 (192 aa).

This sequence belongs to the UPF0301 (AlgH) family.

The chain is UPF0301 protein Bcep1808_0798 from Burkholderia vietnamiensis (strain G4 / LMG 22486) (Burkholderia cepacia (strain R1808)).